We begin with the raw amino-acid sequence, 202 residues long: UPF0301 protein ML0028 (202 aa).

This sequence belongs to the UPF0301 (AlgH) family.

The sequence is that of UPF0301 protein ML0028 from Mycobacterium leprae (strain TN).